Here is a 184-residue protein sequence, read N- to C-terminus: Phosphonoformate cytidylyltransferase (184 aa).

It carries out the reaction phosphonoformate + CTP = CMP-5'-phosphonoformate + diphosphate. It participates in secondary metabolite biosynthesis; bialaphos biosynthesis. Functionally, catalyzes the displacement of the beta- and gamma-phosphates of CTP by phosphonoformate to produce CMP-5'-phosphonoformate, an intermediate in the biosynthesis of phosphinothricin tripeptide (PTT), also known as bialaphos (BA), a natural-product antibiotic and potent herbicide. This is Phosphonoformate cytidylyltransferase from Streptomyces viridochromogenes (strain DSM 40736 / JCM 4977 / BCRC 1201 / Tue 494).